The chain runs to 443 residues: Transcription factor E2F2 (443 aa).

The disordered stretch occupies residues Met1 to Leu22. Positions Ala67–Pro107 are cyclin A/CDK2 binding. A DNA-binding region spans residues Gly109 to Glu198. The segment at Leu157–Leu178 is leucine-zipper. The short motif at Glu162–Glu198 is the DEF box element. Residues Leu199–Ile291 are dimerization. The interval Pro306 to Ser341 is disordered. Residues Pro361–Asn443 are transactivation. The segment at Asp416–Asp433 is retinoblastoma protein binding.

This sequence belongs to the E2F/DP family. Component of the DRTF1/E2F transcription factor complex. Forms heterodimers with DP family members. The E2F2 complex binds specifically hypophosphorylated retinoblastoma protein RB1. During the cell cycle, RB1 becomes phosphorylated in mid-to-late G1 phase, detaches from the DRTF1/E2F complex, rendering E2F transcriptionally active. Viral oncoproteins, notably E1A, T-antigen and HPV E7, are capable of sequestering RB protein, thus releasing the active complex. Binds EAPP. Post-translationally, phosphorylated by CDK2 and cyclin A-CDK2 in the S-phase.

It localises to the nucleus. Transcription activator that binds DNA cooperatively with DP proteins through the E2 recognition site, 5'-TTTC[CG]CGC-3' found in the promoter region of a number of genes whose products are involved in cell cycle regulation or in DNA replication. The DRTF1/E2F complex functions in the control of cell-cycle progression from g1 to s phase. E2F2 binds specifically to RB1 in a cell-cycle dependent manner. In Mus musculus (Mouse), this protein is Transcription factor E2F2 (E2f2).